Reading from the N-terminus, the 231-residue chain is Phosphatidylserine decarboxylase proenzyme (231 aa).

Ser188 serves as the catalytic Schiff-base intermediate with substrate; via pyruvic acid. The residue at position 188 (Ser188) is a Pyruvic acid (Ser); by autocatalysis.

Belongs to the phosphatidylserine decarboxylase family. PSD-A subfamily. Heterodimer of a large membrane-associated beta subunit and a small pyruvoyl-containing alpha subunit. It depends on pyruvate as a cofactor. Post-translationally, is synthesized initially as an inactive proenzyme. Formation of the active enzyme involves a self-maturation process in which the active site pyruvoyl group is generated from an internal serine residue via an autocatalytic post-translational modification. Two non-identical subunits are generated from the proenzyme in this reaction, and the pyruvate is formed at the N-terminus of the alpha chain, which is derived from the carboxyl end of the proenzyme. The post-translation cleavage follows an unusual pathway, termed non-hydrolytic serinolysis, in which the side chain hydroxyl group of the serine supplies its oxygen atom to form the C-terminus of the beta chain, while the remainder of the serine residue undergoes an oxidative deamination to produce ammonia and the pyruvoyl prosthetic group on the alpha chain.

It is found in the cell membrane. The catalysed reaction is a 1,2-diacyl-sn-glycero-3-phospho-L-serine + H(+) = a 1,2-diacyl-sn-glycero-3-phosphoethanolamine + CO2. Its pathway is phospholipid metabolism; phosphatidylethanolamine biosynthesis; phosphatidylethanolamine from CDP-diacylglycerol: step 2/2. Its function is as follows. Catalyzes the formation of phosphatidylethanolamine (PtdEtn) from phosphatidylserine (PtdSer). This chain is Phosphatidylserine decarboxylase proenzyme, found in Rickettsia bellii (strain OSU 85-389).